A 218-amino-acid chain; its full sequence is Recombination protein RecR (218 aa).

A C4-type zinc finger spans residues 56–71 (CRICCNISREEVCRIC). Positions 79-195 (STICVVEEPK…VVSRLASGMP (117 aa)) constitute a Toprim domain.

The protein belongs to the RecR family.

May play a role in DNA repair. It seems to be involved in an RecBC-independent recombinational process of DNA repair. It may act with RecF and RecO. The protein is Recombination protein RecR of Corynebacterium diphtheriae (strain ATCC 700971 / NCTC 13129 / Biotype gravis).